The sequence spans 354 residues: MALISMRQMLDHAAEFGYGVPAFNVNNLEQMRAIMEAADKTDSPVIVQASAGARKYAGAPFLRHLILAAIEEFPHIPVCMHQDHGTSPDVCQRSIQLGFSSVMMDGSLREDGKTPADYDYNVRVTQQTVAFAHACGVSVEGELGCLGSLETGMAGEEDGVGAEGVLDHSQLLTDPEEAADFVAKTKVDALAIAIGTSHGAYKFTNPPTGDTLSIQRIKEIHARIPDTHLVMHGSSSVPQEWLKIINEYGGEIGETYGVPVEEIVEGIKYGVRKVNIDTDLRLASTGAIREFLAKNPSEFDPRKYFAKTVAAMRDICIARYEAFGTAGNASKIKPISLEGMFQRYASGELDPKIN.

D-glyceraldehyde 3-phosphate is bound at residue serine 50. The Proton donor role is filled by aspartate 83. Zn(2+)-binding residues include histidine 84, aspartate 105, glutamate 142, and histidine 198. Glycine 199 contacts dihydroxyacetone phosphate. Histidine 232 serves as a coordination point for Zn(2+). Dihydroxyacetone phosphate is bound by residues 233-235 (GSS) and 275-278 (NIDT).

The protein belongs to the class II fructose-bisphosphate aldolase family. Zn(2+) serves as cofactor.

The enzyme catalyses beta-D-fructose 1,6-bisphosphate = D-glyceraldehyde 3-phosphate + dihydroxyacetone phosphate. Its pathway is carbohydrate degradation; glycolysis; D-glyceraldehyde 3-phosphate and glycerone phosphate from D-glucose: step 4/4. Its function is as follows. Catalyzes the aldol condensation of dihydroxyacetone phosphate (DHAP or glycerone-phosphate) with glyceraldehyde 3-phosphate (G3P) to form fructose 1,6-bisphosphate (FBP) in gluconeogenesis and the reverse reaction in glycolysis. This is Fructose-bisphosphate aldolase (fba) from Stutzerimonas stutzeri (Pseudomonas stutzeri).